We begin with the raw amino-acid sequence, 101 residues long: MAKTSMKNRELKRQQTVAKYAKKRAELKAIIANPNSTPEARWEAQVALQKQPRDASASRLRNRCRITGRPHGVYRKFGLSRNKLREAAMRGDVPGLVKASW.

Belongs to the universal ribosomal protein uS14 family. In terms of assembly, part of the 30S ribosomal subunit. Contacts proteins S3 and S10.

In terms of biological role, binds 16S rRNA, required for the assembly of 30S particles and may also be responsible for determining the conformation of the 16S rRNA at the A site. This Ectopseudomonas mendocina (strain ymp) (Pseudomonas mendocina) protein is Small ribosomal subunit protein uS14.